Consider the following 454-residue polypeptide: 5-hydroxytryptamine receptor 3D (454 aa).

The first 24 residues, 1–24 (MQKHSPGPPALALLSQSLLTTGNG), serve as a signal peptide directing secretion. At 25 to 232 (DTLIINCPGF…IRRRCRPSPY (208 aa)) the chain is on the extracellular side. The N-linked (GlcNAc...) asparagine glycan is linked to Asn66. The helical transmembrane segment at 233-253 (VVNFLVPSGILIAIDALSFYL) threads the bilayer. Over 254–264 (PLESGNCAPFK) the chain is Cytoplasmic. Residues 265 to 285 (MTVLLGYSVFLLMMNDLLPAT) traverse the membrane as a helical segment. Topologically, residues 286 to 306 (STSSHASLVAPLALMQTPLPA) are extracellular. A helical membrane pass occupies residues 307–327 (GVYFALCLSLMVGSLLETIFI). Topologically, residues 328–431 (THLLHVATTQ…WVQFSHAMDA (104 aa)) are cytoplasmic. The interval 363–410 (PQKGNKGPGLTPTHLPGVKEPEVSAGQMPGPGEAELTGGSEWTRAQRE) is disordered. The interval 399 to 430 (TGGSEWTRAQREHEAQKQHSVELWVQFSHAMD) is HA-stretch; determines single-channel conductance in 5-HT3 receptors. Residues 432-452 (LLFRLYLLFMASSIITVICLW) form a helical membrane-spanning segment. At 453–454 (NT) the chain is on the extracellular side.

It belongs to the ligand-gated ion channel (TC 1.A.9) family. 5-hydroxytryptamine receptor (TC 1.A.9.2) subfamily. HTR3D sub-subfamily. Forms homopentameric as well as heteropentameric serotonin-activated cation-selective channel complexes with HTR3A. The homomeric complex is not functional. Heteropentameric complexes display properties which resemble that of neuronal serotonin-activated channels in vivo. In terms of tissue distribution, expressed in liver, as well as fetal and adult colon and kidney.

It is found in the postsynaptic cell membrane. It localises to the cell membrane. The catalysed reaction is Na(+)(in) = Na(+)(out). The enzyme catalyses K(+)(in) = K(+)(out). It catalyses the reaction Ca(2+)(in) = Ca(2+)(out). Functionally, forms serotonin (5-hydroxytryptamine/5-HT3)-activated cation-selective channel complexes, which when activated cause fast, depolarizing responses in neurons. The sequence is that of 5-hydroxytryptamine receptor 3D from Homo sapiens (Human).